A 658-amino-acid chain; its full sequence is UvrABC system protein B (658 aa).

The region spanning Ala-26 to Pro-414 is the Helicase ATP-binding domain. Gly-39–Thr-46 lines the ATP pocket. Residues Tyr-92 to Ile-115 carry the Beta-hairpin motif. Residues Gln-430–Ile-592 form the Helicase C-terminal domain. The UVR domain occupies Asp-622–Gly-658.

It belongs to the UvrB family. Forms a heterotetramer with UvrA during the search for lesions. Interacts with UvrC in an incision complex.

The protein localises to the cytoplasm. In terms of biological role, the UvrABC repair system catalyzes the recognition and processing of DNA lesions. A damage recognition complex composed of 2 UvrA and 2 UvrB subunits scans DNA for abnormalities. Upon binding of the UvrA(2)B(2) complex to a putative damaged site, the DNA wraps around one UvrB monomer. DNA wrap is dependent on ATP binding by UvrB and probably causes local melting of the DNA helix, facilitating insertion of UvrB beta-hairpin between the DNA strands. Then UvrB probes one DNA strand for the presence of a lesion. If a lesion is found the UvrA subunits dissociate and the UvrB-DNA preincision complex is formed. This complex is subsequently bound by UvrC and the second UvrB is released. If no lesion is found, the DNA wraps around the other UvrB subunit that will check the other stand for damage. This chain is UvrABC system protein B, found in Listeria innocua serovar 6a (strain ATCC BAA-680 / CLIP 11262).